Consider the following 375-residue polypeptide: Pectate lyase 1 (375 aa).

Residues 1-21 (MASCTLLAVLVFLCAIVSCFS) form the signal peptide. Cys28 and Cys45 form a disulfide bridge. Residue Asn110 is glycosylated (N-linked (GlcNAc...) asparagine). Cys128 and Cys147 are joined by a disulfide. Residue Asn148 is glycosylated (N-linked (GlcNAc...) asparagine). Position 170 (Asp170) interacts with Ca(2+). Asn178 is a glycosylation site (N-linked (GlcNAc...) asparagine). The Ca(2+) site is built by Asp194 and Asp198. The active site involves Arg250. N-linked (GlcNAc...) asparagine glycosylation occurs at Asn293. Cys306 and Cys312 form a disulfide bridge. The N-linked (GlcNAc...) asparagine glycan is linked to Asn352.

Belongs to the polysaccharide lyase 1 family. Amb a subfamily. The cofactor is Ca(2+).

It carries out the reaction Eliminative cleavage of (1-&gt;4)-alpha-D-galacturonan to give oligosaccharides with 4-deoxy-alpha-D-galact-4-enuronosyl groups at their non-reducing ends.. It functions in the pathway glycan metabolism; pectin degradation; 2-dehydro-3-deoxy-D-gluconate from pectin: step 2/5. Has pectate lyase activity. This chain is Pectate lyase 1, found in Chamaecyparis obtusa (Hinoki false-cypress).